Consider the following 1107-residue polypeptide: Probable chromatin-remodeling complex ATPase chain (1107 aa).

Disordered regions lie at residues 1-124 (MAKP…KREK) and 177-217 (GNQS…GSGG). Composition is skewed to acidic residues over residues 8–25 (DEEEEEVSSSGEEEEEQS), 33–43 (GEEEDEEEEEA), 53–65 (GGEEEEVDEEEIE), and 89–114 (EGDEESQSTEDDEAVVGEDDDADEAE). The stretch at 121–147 (KREKARLKEMQKLKKQKIQEILDTQNA) forms a coiled coil. Over residues 183 to 193 (KKPRGRGRHAS) the composition is skewed to basic residues. Residues 197–211 (EEEEDEEYLKEEEDA) show a composition bias toward acidic residues. In terms of domain architecture, Helicase ATP-binding spans 243 to 408 (IRLYENGING…WSLLNFLLPE (166 aa)). 256–263 (DEMGLGKT) is a binding site for ATP. Residues 359–362 (DEAH) carry the DEAH box motif. One can recognise a Helicase C-terminal domain in the interval 536–687 (LLDKLLPKLK…ALVIQQGRLA (152 aa)). 2 SANT domains span residues 877–929 (EGFA…ERYK) and 978–1039 (QNKG…DTLI). Residues 1029–1067 (QELARRCDTLIRLVEKENQEYDEQERQARKDKRMAKNMT) are a coiled coil. The tract at residues 1049-1107 (YDEQERQARKDKRMAKNMTPTKRSALRVSEGETTPSNSFKRRRQSLMDDYVGSGRRKRG) is disordered.

The protein belongs to the SNF2/RAD54 helicase family. ISWI subfamily.

It is found in the nucleus. In terms of biological role, possesses intrinsic ATP-dependent nucleosome-remodeling activity. Constitutes the catalytic subunit of several complexes capable of forming ordered nucleosome arrays on chromatin in vitro. The polypeptide is Probable chromatin-remodeling complex ATPase chain (Oryza sativa subsp. japonica (Rice)).